The following is a 204-amino-acid chain: Fluoride-specific ion channel FluC 3 (204 aa).

Over residues 1–16 (MRADESGPERESREPT) the composition is skewed to basic and acidic residues. Positions 1-53 (MRADESGPERESREPTHIPGAEPELGGEPTPRGEPGPGFEPGPGGEPAPSRAP) are disordered. Residues 32–46 (RGEPGPGFEPGPGGE) are compositionally biased toward pro residues. 4 helical membrane-spanning segments follow: residues 62 to 82 (VLAAVALGGVLGGSARYALGL), 96 to 116 (FAVNVSGAFLLALLLVYVLEI), 125 to 145 (PFAAVGFLGSFTTFSTWMVDT), and 158 to 178 (AFNVFGSLFAGLAATGLGLAI). Residues G133 and T136 each contribute to the Na(+) site.

Belongs to the fluoride channel Fluc/FEX (TC 1.A.43) family.

The protein resides in the cell membrane. It carries out the reaction fluoride(in) = fluoride(out). With respect to regulation, na(+) is not transported, but it plays an essential structural role and its presence is essential for fluoride channel function. Its function is as follows. Fluoride-specific ion channel. Important for reducing fluoride concentration in the cell, thus reducing its toxicity. The protein is Fluoride-specific ion channel FluC 3 of Streptomyces avermitilis (strain ATCC 31267 / DSM 46492 / JCM 5070 / NBRC 14893 / NCIMB 12804 / NRRL 8165 / MA-4680).